Reading from the N-terminus, the 542-residue chain is Beta-fructofuranosidase, insoluble isoenzyme 5 (542 aa).

Residues 50 to 53 (WQND), Gln69, Trp77, and 114 to 115 (WS) contribute to the substrate site. The active site involves Asp53. N-linked (GlcNAc...) asparagine glycosylation occurs at Asn142. Substrate-binding positions include 178 to 179 (RD) and Glu233. An intrachain disulfide couples Cys389 to Cys436. N-linked (GlcNAc...) asparagine glycans are attached at residues Asn510 and Asn516.

The protein belongs to the glycosyl hydrolase 32 family. In terms of tissue distribution, expressed in roots and leaves.

Its subcellular location is the secreted. It is found in the extracellular space. The protein localises to the apoplast. The protein resides in the cell wall. It catalyses the reaction Hydrolysis of terminal non-reducing beta-D-fructofuranoside residues in beta-D-fructofuranosides.. Its function is as follows. May play a role in stress response. In Oryza sativa subsp. japonica (Rice), this protein is Beta-fructofuranosidase, insoluble isoenzyme 5 (CIN5).